A 259-amino-acid chain; its full sequence is Thiazole synthase (259 aa).

Catalysis depends on Lys95, which acts as the Schiff-base intermediate with DXP. 1-deoxy-D-xylulose 5-phosphate is bound by residues Gly156, Ala183–Gly184, and Asn205–Ser206.

This sequence belongs to the ThiG family. In terms of assembly, homotetramer. Forms heterodimers with either ThiH or ThiS.

Its subcellular location is the cytoplasm. It carries out the reaction [ThiS sulfur-carrier protein]-C-terminal-Gly-aminoethanethioate + 2-iminoacetate + 1-deoxy-D-xylulose 5-phosphate = [ThiS sulfur-carrier protein]-C-terminal Gly-Gly + 2-[(2R,5Z)-2-carboxy-4-methylthiazol-5(2H)-ylidene]ethyl phosphate + 2 H2O + H(+). It functions in the pathway cofactor biosynthesis; thiamine diphosphate biosynthesis. Catalyzes the rearrangement of 1-deoxy-D-xylulose 5-phosphate (DXP) to produce the thiazole phosphate moiety of thiamine. Sulfur is provided by the thiocarboxylate moiety of the carrier protein ThiS. In vitro, sulfur can be provided by H(2)S. In Coxiella burnetii (strain CbuK_Q154) (Coxiella burnetii (strain Q154)), this protein is Thiazole synthase.